We begin with the raw amino-acid sequence, 1730 residues long: MDGPGASAVVVRVGIPDLQQTKCLRLDPTAPVWAAKQRVLCALNHSLQDALNYGLFQPPSRGRAGKFLDEERLLQDYPPNLDTPLPYLEFRYKRRVYAQNLIDDKQFAKLHTKANLKKFMDYVQLHSTDKVARLLDKGLDPNFHDPDSGECPLSLAAQLDNATDLLKVLRNGGAHLDFRTRDGLTAVHCATRQRNAGALTTLLDLGASPDYKDSRGLTPLYHSALGGGDALCCELLLHDHAQLGTTDENGWQEIHQACRFGHVQHLEHLLFYGANMGAQNASGNTALHICALYNQESCARVLLFRGANKDVRNYNSQTAFQVAIIAGNFELAEVIKTHKDSDVVPFRETPSYAKRRRLAGPSGLASPRPLQRSASDINLKGDQPAASPGPTLRSLPHQLLLQRLQEEKDRDRDGELENDISGPSAGRGGHNKISPSGPGGSGPAPGPGPASPAPPAPPPRGPKRKLYSAVPGRKFIAVKAHSPQGEGEIPLHRGEAVKVLSIGEGGFWEGTVKGRTGWFPADCVEEVQMRQYDTRHETREDRTKRLFRHYTVGSYDSLTSHSDYVIDDKVAILQKRDHEGFGFVLRGAKAETPIEEFTPTPAFPALQYLESVDVEGVAWRAGLRTGDFLIEVNGVNVVKVGHKQVVGLIRQGGNRLVMKVVSVTRKPEEDGARRRAPPPPKRAPSTTLTLRSKSMTAELEELASIRRRKGEKLDEILAVAAEPTLRPDIADADSRAATVKQRPTSRRITPAEISSLFERQGLPGPEKLPGSLRKGIPRTKSVGEDEKLASLLEGRFPRSTSMQDTVREGRGIPPPPQTAPPPPPAPYYFDSGPPPTFSPPPPPGRAYDTVRSSFKPGLEARLGAGAAGLYDPSTPLGPLPYPERQKRARSMIILQDSAPEVGDVPRPAPAATPPERPKRRPRPSGPDSPYANLGAFSASLFAPSKPQRRKSPLVKQLQVEDAQERAALAVGSPGPVGGSFAREPSPTHRGPRPGSLDYSSGEGLGLTFGGPSPGPVKERRLEERRRSTVFLSVGAIEGSPPSADLPSLQPSRSIDERLLGTGATTGRDLLLPSPVSALKPLVGGPSLGPSGSTFIHPLTGKPLDPSSPLALALAARERALASQTPSRSPTPVHSPDADRPGPLFVDVQTRDSERGPLASPAFSPRSPAWIPVPARREAEKPPREERKSPEDKKSMILSVLDTSLQRPAGLIVVHATSNGQEPSRLGAEEERPGTPELAPAPMQAAAVAEPMPSPRAQPPGSIPADPGPGQGSSEEEPELVFAVNLPPAQLSSSDEETREELARIGLVPPPEEFANGILLTTPPPGPGPLPTTVPSPASGKPSSELPPAPESAADSGVEEADTRSSSDPHLETTSTISTVSSMSTLSSESGELTDTHTSFADGHTFLLEKPPVPPKPKLKSPLGKGPVTFRDPLLKQSSDSELMAQQHHAASTGLASAAGPARPRYLFQRRSKLWGDPVESRGLPGPEDDKPTVISELSSRLQQLNKDTRSLGEEPVGGLGSLLDPAKKSPIAAARLFSSLGELSTISAQRSPGGPGGGASYSVRPSGRYPVARRAPSPVKPASLERVEGLGAGVGGAGRPFGLTPPTILKSSSLSIPHEPKEVRFVVRSVSARSRSPSPSPLPSPSPGSGPSAGPRRPFQQKPLQLWSKFDVGDWLESIHLGEHRDRFEDHEIEGAHLPALTKEDFVELGVTRVGHRMNIERALRQLDGS.

The intramolecular interaction with the ANK repeats stretch occupies residues M1–Q75. Residue Y122 is modified to Phosphotyrosine. ANK repeat units follow at residues S148–F178, D182–Y211, R215–T245, N249–A278, S282–V311, and N315–P345. The tract at residues K354–L466 is disordered. Residues S373, S375, S387, and S394 each carry the phosphoserine modification. A compositionally biased stretch (basic and acidic residues) spans L404–E415. The span at A444–R460 shows a compositional bias: pro residues. The SH3 domain maps to V470–M529. Residue S482 is modified to Phosphoserine. A Phosphotyrosine modification is found at Y555. Positions V570 to T664 constitute a PDZ domain. The interval T664–L688 is disordered. Residues P677–P684 are required for interaction with ABI1. S694, S781, S790, and S801 each carry phosphoserine. 2 disordered regions span residues Q760–P1460 and G1475–D1524. Over residues I812 to G844 the composition is skewed to pro residues. The segment covering G857–L869 has biased composition (low complexity). S890 and S897 each carry phosphoserine. T912 is modified (phosphothreonine). A Phosphotyrosine modification is found at Y930. The residue at position 965 (R965) is an Asymmetric dimethylarginine. Residue S995 is modified to Phosphoserine. Residues V1016–R1026 show a composition bias toward basic and acidic residues. The segment covering L1078–S1092 has biased composition (low complexity). The span at S1122–P1131 shows a compositional bias: polar residues. At T1130 the chain carries Phosphothreonine. A phosphoserine mark is found at S1134, S1159, S1163, and S1166. A compositionally biased stretch (basic and acidic residues) spans A1174–S1194. A Phosphothreonine modification is found at T1234. Low complexity predominate over residues P1235 to P1250. 2 stretches are compositionally biased toward pro residues: residues M1251–S1261 and T1321–V1333. The residue at position 1253 (S1253) is a Phosphoserine. The segment covering A1360–L1370 has biased composition (basic and acidic residues). Low complexity predominate over residues E1371–L1392. An SH3-binding motif is present at residues P1410–P1416. S1420 carries the phosphoserine modification. Residues I1494–E1514 adopt a coiled-coil conformation. Polar residues predominate over residues S1495 to N1505. S1510, S1521, S1529, and S1539 each carry phosphoserine. Disordered regions lie at residues I1546–L1584 and V1627–P1663. Low complexity predominate over residues V1627 to P1637. Phosphoserine occurs at positions 1634, 1636, and 1638. Over residues S1638–G1648 the composition is skewed to pro residues. The segment covering S1649–P1658 has biased composition (low complexity). One can recognise an SAM domain in the interval W1667–S1730.

It belongs to the SHANK family. In terms of assembly, may homomultimerize via its SAM domain. Interacts with BAIAP2, DBNL and SLC17A7/VGLUT1. Interacts with DLGAP1/GKAP, GRM1/MGLUR1, GRM5/MGLUR5 and LZTS3 C-termini via its PDZ domain. Interacts with ABI1, HOMER1, HOMER2, HOMER3 and CTTN/cortactin SH3 domain. Is part of a complex with DLG4/PSD-95 and DLGAP1/GKAP. Interacts (via PDZ domain) with the GRIA1 subunit of the AMPA receptor (via PDZ-binding motif). Interacts with WASF1 and CYFIP2; the interactions mediate the association of SHANK3 with the WAVE1 complex. Interacts with ARPC2; the interaction probably mediates the association of SHANK3 with the Arp2/3 complex. Interacts (via ANK repeats) with SHARPIN and SPTAN1. Interacts (via PDZ domain) with ARHGAP44 (probably via PDZ-binding motif); the interaction takes place in dendritic spines and promotes GRIA1 exocytosis. Interacts with CAMK2A. Interacts with DIP2A. Interacts with ADGRL3. In terms of tissue distribution, in brain, highly expressed in striatum, thalamus, hippocampus and granule cells of the cerebellum.

The protein localises to the cytoplasm. It localises to the synapse. The protein resides in the postsynaptic density. Its subcellular location is the cell projection. It is found in the dendritic spine. Functionally, major scaffold postsynaptic density protein which interacts with multiple proteins and complexes to orchestrate the dendritic spine and synapse formation, maturation and maintenance. Interconnects receptors of the postsynaptic membrane including NMDA-type and metabotropic glutamate receptors via complexes with GKAP/PSD-95 and HOMER, respectively, and the actin-based cytoskeleton. Plays a role in the structural and functional organization of the dendritic spine and synaptic junction through the interaction with Arp2/3 and WAVE1 complex as well as the promotion of the F-actin clusters. By way of this control of actin dynamics, participates in the regulation of developing neurons growth cone motility and the NMDA receptor-signaling. Also modulates GRIA1 exocytosis and GRM5/MGLUR5 expression and signaling to control the AMPA and metabotropic glutamate receptor-mediated synaptic transmission and plasticity. May be required at an early stage of synapse formation and be inhibited by IGF1 to promote synapse maturation. The chain is SH3 and multiple ankyrin repeat domains protein 3 (Shank3) from Mus musculus (Mouse).